Reading from the N-terminus, the 318-residue chain is Beta-ketoacyl-[acyl-carrier-protein] synthase III (318 aa).

Catalysis depends on residues Cys-112 and His-245. Residues Gln-246–Arg-250 are ACP-binding. The active site involves Asn-275.

This sequence belongs to the thiolase-like superfamily. FabH family. In terms of assembly, homodimer.

The protein resides in the cytoplasm. It carries out the reaction malonyl-[ACP] + acetyl-CoA + H(+) = 3-oxobutanoyl-[ACP] + CO2 + CoA. Its pathway is lipid metabolism; fatty acid biosynthesis. Catalyzes the condensation reaction of fatty acid synthesis by the addition to an acyl acceptor of two carbons from malonyl-ACP. Catalyzes the first condensation reaction which initiates fatty acid synthesis and may therefore play a role in governing the total rate of fatty acid production. Possesses both acetoacetyl-ACP synthase and acetyl transacylase activities. Its substrate specificity determines the biosynthesis of branched-chain and/or straight-chain of fatty acids. The protein is Beta-ketoacyl-[acyl-carrier-protein] synthase III of Blochmanniella floridana.